The primary structure comprises 401 residues: L-threonine ammonia-lyase (401 aa).

At K51 the chain carries N6-(pyridoxal phosphate)lysine. Residues N78, 178 to 181 (GGGL), and S301 contribute to the pyridoxal 5'-phosphate site. The 76-residue stretch at 326–401 (FIETFVMDRP…AKGYEVRIVG (76 aa)) folds into the ACT domain.

The protein belongs to the serine/threonine dehydratase family. Homotetramer. The cofactor is pyridoxal 5'-phosphate.

The catalysed reaction is L-threonine = 2-oxobutanoate + NH4(+). It carries out the reaction L-serine = pyruvate + NH4(+). The protein operates within amino-acid biosynthesis; L-isoleucine biosynthesis; 2-oxobutanoate from L-threonine: step 1/1. Activity is insensitive to allosteric regulators L-valine and L-isoleucine at low concentrations, while these L-amino acids are inhibitors at high concentrations. Is insensitive to ammonium chloride and AMP. Inhibited in the presence of aminoxyacetic acid (AOAA), an inhibitor of pyridoxal phosphate-dependent enzymes. In terms of biological role, catalyzes the conversion of L-threonine to 2-oxobutanoate and ammonia. Can also use L-serine, but the catalytic efficiency toward L-threonine is about sixfold higher than that toward L-serine. Also shows weak activity toward L-allo-threonine, but cannot use the corresponding D-amino acids. Does not exhibit racemase activity toward various amino acids, including serine. Physiologically, is likely involved in the threonine-dependent pathway of isoleucine biosynthesis. The protein is L-threonine ammonia-lyase of Thermotoga maritima (strain ATCC 43589 / DSM 3109 / JCM 10099 / NBRC 100826 / MSB8).